The following is a 537-amino-acid chain: 2-succinyl-5-enolpyruvyl-6-hydroxy-3-cyclohexene-1-carboxylate synthase (537 aa).

It belongs to the TPP enzyme family. MenD subfamily. Homodimer. Mg(2+) is required as a cofactor. Mn(2+) serves as cofactor. The cofactor is thiamine diphosphate.

The enzyme catalyses isochorismate + 2-oxoglutarate + H(+) = 5-enolpyruvoyl-6-hydroxy-2-succinyl-cyclohex-3-ene-1-carboxylate + CO2. It participates in quinol/quinone metabolism; 1,4-dihydroxy-2-naphthoate biosynthesis; 1,4-dihydroxy-2-naphthoate from chorismate: step 2/7. It functions in the pathway quinol/quinone metabolism; menaquinone biosynthesis. Functionally, catalyzes the thiamine diphosphate-dependent decarboxylation of 2-oxoglutarate and the subsequent addition of the resulting succinic semialdehyde-thiamine pyrophosphate anion to isochorismate to yield 2-succinyl-5-enolpyruvyl-6-hydroxy-3-cyclohexene-1-carboxylate (SEPHCHC). The polypeptide is 2-succinyl-5-enolpyruvyl-6-hydroxy-3-cyclohexene-1-carboxylate synthase (Desulfotalea psychrophila (strain LSv54 / DSM 12343)).